We begin with the raw amino-acid sequence, 255 residues long: 5'-nucleotidase SurE (255 aa).

A divalent metal cation-binding residues include aspartate 8, aspartate 9, serine 40, and asparagine 93.

It belongs to the SurE nucleotidase family. A divalent metal cation is required as a cofactor.

The protein localises to the cytoplasm. It catalyses the reaction a ribonucleoside 5'-phosphate + H2O = a ribonucleoside + phosphate. Its function is as follows. Nucleotidase that shows phosphatase activity on nucleoside 5'-monophosphates. The protein is 5'-nucleotidase SurE of Rhodopseudomonas palustris (strain ATCC BAA-98 / CGA009).